A 341-amino-acid chain; its full sequence is DNA-directed RNA polymerase subunit alpha (341 aa).

Residues 1–233 are alpha N-terminal domain (alpha-NTD); it reads MLKDGTSVSN…DLLSPFLHTK (233 aa). Residues 262-341 form an alpha C-terminal domain (alpha-CTD) region; that stretch reads SEGDFFKNTF…NEKPRVVGDE (80 aa).

Belongs to the RNA polymerase alpha chain family. In plastids the minimal PEP RNA polymerase catalytic core is composed of four subunits: alpha, beta, beta', and beta''. When a (nuclear-encoded) sigma factor is associated with the core the holoenzyme is formed, which can initiate transcription.

It localises to the plastid. The protein localises to the chloroplast. The catalysed reaction is RNA(n) + a ribonucleoside 5'-triphosphate = RNA(n+1) + diphosphate. In terms of biological role, DNA-dependent RNA polymerase catalyzes the transcription of DNA into RNA using the four ribonucleoside triphosphates as substrates. The sequence is that of DNA-directed RNA polymerase subunit alpha from Marsilea quadrifolia (European water clover).